Here is a 473-residue protein sequence, read N- to C-terminus: Bifunctional protein GlmU (473 aa).

The interval 1-226 (MRAPVAVVIL…AGEASGINDL (226 aa)) is pyrophosphorylase. Residues 10–13 (LAAG), K24, Q75, 80–81 (GT), 102–104 (YGD), G136, E151, N166, and N224 contribute to the UDP-N-acetyl-alpha-D-glucosamine site. D104 serves as a coordination point for Mg(2+). N224 lines the Mg(2+) pocket. A linker region spans residues 227–247 (VQLAEVEEAFQRRWARRLLQG). Positions 248–473 (GLRLVAPHRF…TPASGGAKEE (226 aa)) are N-acetyltransferase. 2 residues coordinate UDP-N-acetyl-alpha-D-glucosamine: R330 and K348. H360 serves as the catalytic Proton acceptor. Y363 and N374 together coordinate UDP-N-acetyl-alpha-D-glucosamine. Residues A377, 383-384 (NY), S402, A420, and R437 each bind acetyl-CoA. The interval 439–473 (RARTIPGWQHPGLTGRRGPPDDNDATPASGGAKEE) is disordered.

In the N-terminal section; belongs to the N-acetylglucosamine-1-phosphate uridyltransferase family. This sequence in the C-terminal section; belongs to the transferase hexapeptide repeat family. In terms of assembly, homotrimer. Requires Mg(2+) as cofactor.

The protein localises to the cytoplasm. The enzyme catalyses alpha-D-glucosamine 1-phosphate + acetyl-CoA = N-acetyl-alpha-D-glucosamine 1-phosphate + CoA + H(+). It catalyses the reaction N-acetyl-alpha-D-glucosamine 1-phosphate + UTP + H(+) = UDP-N-acetyl-alpha-D-glucosamine + diphosphate. It functions in the pathway nucleotide-sugar biosynthesis; UDP-N-acetyl-alpha-D-glucosamine biosynthesis; N-acetyl-alpha-D-glucosamine 1-phosphate from alpha-D-glucosamine 6-phosphate (route II): step 2/2. The protein operates within nucleotide-sugar biosynthesis; UDP-N-acetyl-alpha-D-glucosamine biosynthesis; UDP-N-acetyl-alpha-D-glucosamine from N-acetyl-alpha-D-glucosamine 1-phosphate: step 1/1. Its pathway is bacterial outer membrane biogenesis; LPS lipid A biosynthesis. Functionally, catalyzes the last two sequential reactions in the de novo biosynthetic pathway for UDP-N-acetylglucosamine (UDP-GlcNAc). The C-terminal domain catalyzes the transfer of acetyl group from acetyl coenzyme A to glucosamine-1-phosphate (GlcN-1-P) to produce N-acetylglucosamine-1-phosphate (GlcNAc-1-P), which is converted into UDP-GlcNAc by the transfer of uridine 5-monophosphate (from uridine 5-triphosphate), a reaction catalyzed by the N-terminal domain. In Halorhodospira halophila (strain DSM 244 / SL1) (Ectothiorhodospira halophila (strain DSM 244 / SL1)), this protein is Bifunctional protein GlmU.